A 401-amino-acid polypeptide reads, in one-letter code: Protein zntC (401 aa).

A run of 3 helical transmembrane segments spans residues 33 to 53, 61 to 81, and 114 to 134; these read GGLI…PWFL, LVSV…GAGF, and ITIV…SGGL. A disordered region spans residues 141–247; that stretch reads NHMDLSQHNH…SHKDEKDSEK (107 aa). A compositionally biased stretch (acidic residues) spans 167 to 184; that stretch reads GDDDDDDVNEDQEEDSTK. Residues 200-209 show a composition bias toward low complexity; it reads HNSSNSSSNG. Residues 212-225 show a composition bias toward basic residues; that stretch reads HGLKKKKKSKKEHG. Over residues 226 to 247 the composition is skewed to basic and acidic residues; it reads HGHNHDHSSNGHSHKDEKDSEK. The next 5 membrane-spanning stretches (helical) occupy residues 256–276, 285–305, 316–336, 351–371, and 381–401; these read AWVF…GLGS, GLLI…GIAI, CIAL…GMAI, GIIL…ELLP, and KLKL…ALWV.

It belongs to the ZIP transporter (TC 2.A.5) family.

Its subcellular location is the membrane. May transport divalent cations. May participate, with dstA, in the regulation of the differentiation of stalk cells during development. The chain is Protein zntC (zntC) from Dictyostelium discoideum (Social amoeba).